A 142-amino-acid polypeptide reads, in one-letter code: Cytidine deaminase (142 aa).

The CMP/dCMP-type deaminase domain occupies 9 to 139 (RQLEALKRAA…ELLPMAFGPS (131 aa)). 50 to 52 (NVE) is a substrate binding site. Cys-61 contributes to the Zn(2+) binding site. Residue Glu-63 is the Proton donor of the active site. Residues Cys-96 and Cys-99 each contribute to the Zn(2+) site.

It belongs to the cytidine and deoxycytidylate deaminase family. As to quaternary structure, homodimer. Requires Zn(2+) as cofactor.

The catalysed reaction is cytidine + H2O + H(+) = uridine + NH4(+). The enzyme catalyses 2'-deoxycytidine + H2O + H(+) = 2'-deoxyuridine + NH4(+). Its function is as follows. This enzyme scavenges exogenous and endogenous cytidine and 2'-deoxycytidine for UMP synthesis. This is Cytidine deaminase (CDD1) from Saccharomyces cerevisiae (strain ATCC 204508 / S288c) (Baker's yeast).